Here is a 394-residue protein sequence, read N- to C-terminus: Elongation factor Tu 1 (394 aa).

In terms of domain architecture, tr-type G spans 10–204 (KPHVNVGTIG…ALDSYIPQPE (195 aa)). The G1 stretch occupies residues 19–26 (GHVDHGKT). 19-26 (GHVDHGKT) serves as a coordination point for GTP. A Mg(2+)-binding site is contributed by T26. Residues 60–64 (GITIN) form a G2 region. The tract at residues 81-84 (DCPG) is G3. Residues 81-85 (DCPGH) and 136-139 (NKCD) each bind GTP. Positions 136-139 (NKCD) are G4. The tract at residues 174–176 (SAL) is G5.

The protein belongs to the TRAFAC class translation factor GTPase superfamily. Classic translation factor GTPase family. EF-Tu/EF-1A subfamily. As to quaternary structure, monomer.

Its subcellular location is the cytoplasm. It catalyses the reaction GTP + H2O = GDP + phosphate + H(+). In terms of biological role, GTP hydrolase that promotes the GTP-dependent binding of aminoacyl-tRNA to the A-site of ribosomes during protein biosynthesis. The chain is Elongation factor Tu 1 from Yersinia pestis bv. Antiqua (strain Nepal516).